The sequence spans 221 residues: Protein LURP-one-related 17 (221 aa).

The disordered stretch occupies residues 1 to 20 (MFPFLKQRSRSVHGEDAPSS).

The protein belongs to the LOR family.

Its function is as follows. Might be related to the phospholipid scramblase and tubby-like superfamily of membrane tethered transcription factors. The polypeptide is Protein LURP-one-related 17 (Arabidopsis thaliana (Mouse-ear cress)).